The primary structure comprises 491 residues: Glycogen synthase 1 (491 aa).

Lysine 15 lines the ADP-alpha-D-glucose pocket.

The protein belongs to the glycosyltransferase 1 family. Bacterial/plant glycogen synthase subfamily.

The enzyme catalyses [(1-&gt;4)-alpha-D-glucosyl](n) + ADP-alpha-D-glucose = [(1-&gt;4)-alpha-D-glucosyl](n+1) + ADP + H(+). It functions in the pathway glycan biosynthesis; glycogen biosynthesis. In terms of biological role, synthesizes alpha-1,4-glucan chains using ADP-glucose. The chain is Glycogen synthase 1 from Synechococcus sp. (strain JA-2-3B'a(2-13)) (Cyanobacteria bacterium Yellowstone B-Prime).